We begin with the raw amino-acid sequence, 134 residues long: Putative pre-16S rRNA nuclease (134 aa).

It belongs to the YqgF nuclease family.

It localises to the cytoplasm. Its function is as follows. Could be a nuclease involved in processing of the 5'-end of pre-16S rRNA. The chain is Putative pre-16S rRNA nuclease from Helicobacter pylori (strain G27).